The chain runs to 268 residues: Putative ABC transporter ATP-binding protein MK0182 (268 aa).

In terms of domain architecture, ABC transporter spans 1–229; sequence MTHEYPDGTC…VDLIRESGLK (229 aa). 29-36 contacts ATP; it reads GPNGSGKT.

This sequence belongs to the ABC transporter superfamily.

The protein resides in the cell membrane. In terms of biological role, probably part of an ABC transporter complex. Responsible for energy coupling to the transport system. This chain is Putative ABC transporter ATP-binding protein MK0182, found in Methanopyrus kandleri (strain AV19 / DSM 6324 / JCM 9639 / NBRC 100938).